Consider the following 419-residue polypeptide: DNA ligase (419 aa).

The segment at 1-120 (MLNHFPGHCS…ARQKRGAHTN (120 aa)) is NTD. The AD domain stretch occupies residues 121 to 317 (TGMIPPMLVK…NYHSAHLAKL (197 aa)). Lys-151 functions as the N6-AMP-lysine intermediate in the catalytic mechanism. Residues 318–419 (KPLLDAEFIL…REPINVLEII (102 aa)) are OB domain.

This sequence belongs to the ATP-dependent DNA ligase family.

It is found in the virion. It catalyses the reaction ATP + (deoxyribonucleotide)n-3'-hydroxyl + 5'-phospho-(deoxyribonucleotide)m = (deoxyribonucleotide)n+m + AMP + diphosphate.. Functionally, very low-fidelity DNA ligase that seals nicks in double-stranded DNA during DNA repair. Together with the viral repair DNA polymerase X, fills the single nucleotide gaps generated by the AP endonuclease. It is not essential for viral replication and recombination. Displays a very low adenylation activity towards DNA with 3'-dideoxy- or 3'-amino-terminated nicks compared to regular nick DNA. The polypeptide is DNA ligase (Ornithodoros (relapsing fever ticks)).